The sequence spans 434 residues: Histidinol dehydrogenase (434 aa).

NAD(+) is bound by residues Tyr-130, Gln-188, and Asn-211. Residues Ser-237, Gln-259, and His-262 each contribute to the substrate site. Residues Gln-259 and His-262 each contribute to the Zn(2+) site. Active-site proton acceptor residues include Glu-326 and His-327. Positions 327, 360, 414, and 419 each coordinate substrate. Residue Asp-360 coordinates Zn(2+). His-419 provides a ligand contact to Zn(2+).

It belongs to the histidinol dehydrogenase family. As to quaternary structure, homodimer. Zn(2+) is required as a cofactor.

The enzyme catalyses L-histidinol + 2 NAD(+) + H2O = L-histidine + 2 NADH + 3 H(+). The protein operates within amino-acid biosynthesis; L-histidine biosynthesis; L-histidine from 5-phospho-alpha-D-ribose 1-diphosphate: step 9/9. Its function is as follows. Catalyzes the sequential NAD-dependent oxidations of L-histidinol to L-histidinaldehyde and then to L-histidine. This is Histidinol dehydrogenase from Escherichia coli O6:H1 (strain CFT073 / ATCC 700928 / UPEC).